Consider the following 473-residue polypeptide: Bifunctional protein HldE (473 aa).

The tract at residues 1 to 318 (MKLSMPRFDQ…RAIQREEGSE (318 aa)) is ribokinase. 194–197 (NLSE) lines the ATP pocket. Residue D263 is part of the active site. The tract at residues 343–473 (FTNGCFDILH…TAIVEKIRKH (131 aa)) is cytidylyltransferase.

In the N-terminal section; belongs to the carbohydrate kinase PfkB family. The protein in the C-terminal section; belongs to the cytidylyltransferase family. As to quaternary structure, homodimer.

It carries out the reaction D-glycero-beta-D-manno-heptose 7-phosphate + ATP = D-glycero-beta-D-manno-heptose 1,7-bisphosphate + ADP + H(+). The enzyme catalyses D-glycero-beta-D-manno-heptose 1-phosphate + ATP + H(+) = ADP-D-glycero-beta-D-manno-heptose + diphosphate. It participates in nucleotide-sugar biosynthesis; ADP-L-glycero-beta-D-manno-heptose biosynthesis; ADP-L-glycero-beta-D-manno-heptose from D-glycero-beta-D-manno-heptose 7-phosphate: step 1/4. The protein operates within nucleotide-sugar biosynthesis; ADP-L-glycero-beta-D-manno-heptose biosynthesis; ADP-L-glycero-beta-D-manno-heptose from D-glycero-beta-D-manno-heptose 7-phosphate: step 3/4. Catalyzes the phosphorylation of D-glycero-D-manno-heptose 7-phosphate at the C-1 position to selectively form D-glycero-beta-D-manno-heptose-1,7-bisphosphate. Functionally, catalyzes the ADP transfer from ATP to D-glycero-beta-D-manno-heptose 1-phosphate, yielding ADP-D-glycero-beta-D-manno-heptose. This chain is Bifunctional protein HldE, found in Pseudomonas entomophila (strain L48).